The primary structure comprises 226 residues: Small ribosomal subunit protein uS3 (226 aa).

The KH type-2 domain occupies 39-107 (VRNFIRKKLA…PVHINIEEIR (69 aa)).

This sequence belongs to the universal ribosomal protein uS3 family. As to quaternary structure, part of the 30S ribosomal subunit. Forms a tight complex with proteins S10 and S14.

Its function is as follows. Binds the lower part of the 30S subunit head. Binds mRNA in the 70S ribosome, positioning it for translation. This Alkalilimnicola ehrlichii (strain ATCC BAA-1101 / DSM 17681 / MLHE-1) protein is Small ribosomal subunit protein uS3.